Reading from the N-terminus, the 249-residue chain is MAPSRKFFVGGNWKMNGRKKNLGELITTLNAAKVPADTEVVCAPPTAYIDFARQKLDPKIAVAAQNCYKVTNGAFTGEISPGMIKDCGATWVVLGHSERRHVFGESDELIGQKVAHALSEGLGVIACIGEKLDEREAGITEKVVFEQTKVIADNVKDWSKVVLAYEPVWAIGTGKTATPQQAQEVHEKLRGWLKSNVSDAVAQSTRIIYGGSVTGATCKELASQPDVDGFLVGGASLKPEFVDIINAKQ.

Substrate contacts are provided by asparagine 12 and lysine 14. An N6-acetyllysine modification is found at lysine 14. Asparagine 16 carries the post-translational modification Deamidated asparagine. Position 68 is a 3'-nitrotyrosine (tyrosine 68). The residue at position 72 (asparagine 72) is a Deamidated asparagine. Serine 80 carries the post-translational modification Phosphoserine. Histidine 96 serves as the catalytic Electrophile. Serine 106 is subject to Phosphoserine. A Glycyl lysine isopeptide (Lys-Gly) (interchain with G-Cter in SUMO1) cross-link involves residue lysine 142. The residue at position 149 (lysine 149) is an N6-succinyllysine. At lysine 156 the chain carries N6-acetyllysine; alternate. At lysine 156 the chain carries N6-succinyllysine; alternate. Residue serine 159 is modified to Phosphoserine. Catalysis depends on glutamate 166, which acts as the Proton acceptor. Phosphothreonine is present on threonine 173. Lysine 194 is modified (N6-acetyllysine; alternate). Lysine 194 bears the N6-succinyllysine; alternate mark. Position 194 is an N6-methyllysine; alternate (lysine 194). Serine 198 is subject to Phosphoserine. At tyrosine 209 the chain carries 3'-nitrotyrosine. Serine 212 carries the phosphoserine modification. Threonine 214 carries the phosphothreonine modification. Serine 223 is modified (phosphoserine). At lysine 238 the chain carries N6-acetyllysine.

The protein belongs to the triosephosphate isomerase family. Homodimer. In terms of processing, asn-16 and Asn-72 undergo deamidation which gives rise to four extra negative charges. These are expected to decrease subunit-subunit interactions and so expose the hydrophobic interface to the aqueous environment.

Its subcellular location is the cytoplasm. The enzyme catalyses D-glyceraldehyde 3-phosphate = dihydroxyacetone phosphate. It catalyses the reaction dihydroxyacetone phosphate = methylglyoxal + phosphate. It participates in carbohydrate degradation; glycolysis; D-glyceraldehyde 3-phosphate from glycerone phosphate: step 1/1. The protein operates within carbohydrate biosynthesis; gluconeogenesis. Triosephosphate isomerase is an extremely efficient metabolic enzyme that catalyzes the interconversion between dihydroxyacetone phosphate (DHAP) and D-glyceraldehyde-3-phosphate (G3P) in glycolysis and gluconeogenesis. In terms of biological role, it is also responsible for the non-negligible production of methylglyoxal a reactive cytotoxic side-product that modifies and can alter proteins, DNA and lipids. The polypeptide is Triosephosphate isomerase (TPI1) (Oryctolagus cuniculus (Rabbit)).